A 72-amino-acid chain; its full sequence is Translation initiation factor IF-1 (72 aa).

The S1-like domain maps to 1–72; it reads MSKEENIEMQ…TKGRIIFRSR (72 aa).

The protein belongs to the IF-1 family. Component of the 30S ribosomal translation pre-initiation complex which assembles on the 30S ribosome in the order IF-2 and IF-3, IF-1 and N-formylmethionyl-tRNA(fMet); mRNA recruitment can occur at any time during PIC assembly.

It is found in the cytoplasm. In terms of biological role, one of the essential components for the initiation of protein synthesis. Stabilizes the binding of IF-2 and IF-3 on the 30S subunit to which N-formylmethionyl-tRNA(fMet) subsequently binds. Helps modulate mRNA selection, yielding the 30S pre-initiation complex (PIC). Upon addition of the 50S ribosomal subunit IF-1, IF-2 and IF-3 are released leaving the mature 70S translation initiation complex. In Buchnera aphidicola subsp. Acyrthosiphon pisum (strain APS) (Acyrthosiphon pisum symbiotic bacterium), this protein is Translation initiation factor IF-1.